A 592-amino-acid chain; its full sequence is Arginine--tRNA ligase (592 aa).

The 'HIGH' region motif lies at 139–149; the sequence is ANPNGPLHIGH.

The protein belongs to the class-I aminoacyl-tRNA synthetase family.

It localises to the cytoplasm. It carries out the reaction tRNA(Arg) + L-arginine + ATP = L-arginyl-tRNA(Arg) + AMP + diphosphate. This chain is Arginine--tRNA ligase, found in Methanopyrus kandleri (strain AV19 / DSM 6324 / JCM 9639 / NBRC 100938).